The chain runs to 413 residues: Imidazolonepropionase (413 aa).

Residues H77 and H79 each contribute to the Fe(3+) site. Zn(2+) is bound by residues H77 and H79. 3 residues coordinate 4-imidazolone-5-propanoate: R86, Y149, and H182. N-formimidoyl-L-glutamate is bound at residue Y149. H247 contributes to the Fe(3+) binding site. H247 contributes to the Zn(2+) binding site. Residue Q250 coordinates 4-imidazolone-5-propanoate. D322 contacts Fe(3+). Position 322 (D322) interacts with Zn(2+). N-formimidoyl-L-glutamate contacts are provided by N324 and G326. Residue T327 participates in 4-imidazolone-5-propanoate binding.

Belongs to the metallo-dependent hydrolases superfamily. HutI family. Requires Zn(2+) as cofactor. Fe(3+) serves as cofactor.

Its subcellular location is the cytoplasm. The enzyme catalyses 4-imidazolone-5-propanoate + H2O = N-formimidoyl-L-glutamate. It participates in amino-acid degradation; L-histidine degradation into L-glutamate; N-formimidoyl-L-glutamate from L-histidine: step 3/3. Its function is as follows. Catalyzes the hydrolytic cleavage of the carbon-nitrogen bond in imidazolone-5-propanoate to yield N-formimidoyl-L-glutamate. It is the third step in the universal histidine degradation pathway. This chain is Imidazolonepropionase, found in Chromobacterium violaceum (strain ATCC 12472 / DSM 30191 / JCM 1249 / CCUG 213 / NBRC 12614 / NCIMB 9131 / NCTC 9757 / MK).